A 306-amino-acid chain; its full sequence is Methionyl-tRNA formyltransferase (306 aa).

110 to 113 (SLLP) provides a ligand contact to (6S)-5,6,7,8-tetrahydrofolate.

Belongs to the Fmt family.

The catalysed reaction is L-methionyl-tRNA(fMet) + (6R)-10-formyltetrahydrofolate = N-formyl-L-methionyl-tRNA(fMet) + (6S)-5,6,7,8-tetrahydrofolate + H(+). Its function is as follows. Attaches a formyl group to the free amino group of methionyl-tRNA(fMet). The formyl group appears to play a dual role in the initiator identity of N-formylmethionyl-tRNA by promoting its recognition by IF2 and preventing the misappropriation of this tRNA by the elongation apparatus. The sequence is that of Methionyl-tRNA formyltransferase from Brucella melitensis biotype 2 (strain ATCC 23457).